Here is a 91-residue protein sequence, read N- to C-terminus: Large ribosomal subunit protein uL23 (91 aa).

It belongs to the universal ribosomal protein uL23 family. In terms of assembly, part of the 50S ribosomal subunit. Contacts protein L29, and trigger factor when it is bound to the ribosome.

Its function is as follows. One of the early assembly proteins it binds 23S rRNA. One of the proteins that surrounds the polypeptide exit tunnel on the outside of the ribosome. Forms the main docking site for trigger factor binding to the ribosome. The sequence is that of Large ribosomal subunit protein uL23 from Staphylococcus epidermidis (strain ATCC 35984 / DSM 28319 / BCRC 17069 / CCUG 31568 / BM 3577 / RP62A).